Here is a 216-residue protein sequence, read N- to C-terminus: MIDRTKNESPAFEESPLTPNVSNLKPFPSQSNKISTPVTDHRRRRSSSVISHVEQETFEDENDQQMLPNMNATWVDQRGAWLIHIVVIVLLRLFYSLFGSTPKWTWTLTNMTYIIGFYIMFHLVKGTPFDFNGGAYDNLTMWEQINDETLYTPTRKFLLIVPIVLFLISNQYYRNDMTLFLSNLAVTVLIGVVPKLGITHRLRISIPGITGRAQIS.

The interval 1 to 50 (MIDRTKNESPAFEESPLTPNVSNLKPFPSQSNKISTPVTDHRRRRSSSVI) is disordered. The Cytoplasmic segment spans residues 1–78 (MIDRTKNESP…NMNATWVDQR (78 aa)). Residues serine 9 and serine 15 each carry the phosphoserine modification. The span at 17-38 (LTPNVSNLKPFPSQSNKISTPV) shows a compositional bias: polar residues. Position 18 is a phosphothreonine (threonine 18). Serine 22, serine 29, and serine 51 each carry phosphoserine. The chain crosses the membrane as a helical span at residues 79-99 (GAWLIHIVVIVLLRLFYSLFG). The Extracellular segment spans residues 100 to 103 (STPK). The helical transmembrane segment at 104-124 (WTWTLTNMTYIIGFYIMFHLV) threads the bilayer. Residues 125–148 (KGTPFDFNGGAYDNLTMWEQINDE) are Cytoplasmic-facing. The helical transmembrane segment at 149–169 (TLYTPTRKFLLIVPIVLFLIS) threads the bilayer. Over 170 to 177 (NQYYRNDM) the chain is Extracellular. A helical transmembrane segment spans residues 178 to 198 (TLFLSNLAVTVLIGVVPKLGI). Topologically, residues 199–216 (THRLRISIPGITGRAQIS) are cytoplasmic.

Belongs to the ORM family. In terms of assembly, component of the SPOTS complex, at least composed of LCB1/2 (LCB1 and/or LCB2), ORM1/2 (ORM1 and/or ORM2), SAC1 and TSC3. Post-translationally, phosphorylated in case of disruption of sphingolipid synthesis. Phosphorylation regulates the inhibitory activity of serine palmitoyltransferases (LCB1 and LCB2).

Its subcellular location is the endoplasmic reticulum membrane. Component of the SPOTS complex that acts as a negative regulator of sphingolipid synthesis. Acts by inhibiting serine palmitoyltransferases (LCB1 and LCB2) activity. Along with ORM1, plays a role in the phosphorylation of LAC1 and YPK1, the distribution of actin patches between mother and daughter cells, and in endocytosis. The protein is Protein ORM2 (ORM2) of Saccharomyces cerevisiae (strain ATCC 204508 / S288c) (Baker's yeast).